The following is a 473-amino-acid chain: Ribulose bisphosphate carboxylase large chain (473 aa).

The substrate site is built by N116 and T166. K168 functions as the Proton acceptor in the catalytic mechanism. K170 contributes to the substrate binding site. Mg(2+)-binding residues include K194, D196, and E197. K194 carries the N6-carboxylysine modification. H287 (proton acceptor) is an active-site residue. The substrate site is built by R288, H320, and S372.

Belongs to the RuBisCO large chain family. Type I subfamily. As to quaternary structure, heterohexadecamer of 8 large chains and 8 small chains. Mg(2+) is required as a cofactor.

The enzyme catalyses 2 (2R)-3-phosphoglycerate + 2 H(+) = D-ribulose 1,5-bisphosphate + CO2 + H2O. The catalysed reaction is D-ribulose 1,5-bisphosphate + O2 = 2-phosphoglycolate + (2R)-3-phosphoglycerate + 2 H(+). Functionally, ruBisCO catalyzes two reactions: the carboxylation of D-ribulose 1,5-bisphosphate, the primary event in carbon dioxide fixation, as well as the oxidative fragmentation of the pentose substrate. Both reactions occur simultaneously and in competition at the same active site. This Nitrosospira sp. (strain TCH716) protein is Ribulose bisphosphate carboxylase large chain.